Here is a 500-residue protein sequence, read N- to C-terminus: MSGPGPREPPPEAGAAGGEAAVEGAGGGDAALGEPGLSFTTTDLSLVEMTEVEYTQLQHILCSHMEAAADGELETRLNSALLAAAGPGAGAGGFAAGGQGGAAPVYPVLCPSALAADAPCLGHIDFQELRMMLLSEAGAAEKTSGGGDGARARADGAAKEGAGAAAAAAGPDGAPEARAKPAVRVRLEDRFNSIPAEPPPAPRGPEPPEPGGALNNLVTLIRHPSELMNVPLQQQNKCTALVKNKTAATTTALQFTYPLFTTNACSTSGNSNLSQTQSSSNSCSVLEAAKHQDIGLPRAFSFCYQQEIESTKQTLGSRNKVLPEQVWIKVGEAALCKQALKRNRSRMRQLDTNVERRALGEIQNVGEGATATQGAWQSSESSQANLGEQAQSGPQGGRSQRRERHNRMERDRRRRIRICCDELNLLVPFCNAETDKATTLQWTTAFLKYIQERHGDSLKKEFESVFCGKTGRRLKLTRPDSLVTCPAQGSLQSSPSMEIK.

2 stretches are compositionally biased toward pro residues: residues 1-12 and 196-210; these read MSGPGPREPPPE and AEPP…PPEP. Disordered regions lie at residues 1-34 and 191-211; these read MSGP…ALGE and FNSI…PEPG. Positions 347–356 are R3 epitope (recognized by Chagas's antibodies); that stretch reads MRQLDTNVER. The segment at 365-410 is disordered; the sequence is VGEGATATQGAWQSSESSQANLGEQAQSGPQGGRSQRRERHNRMER. Residues 370–393 show a composition bias toward polar residues; that stretch reads TATQGAWQSSESSQANLGEQAQSG. The region spanning 400–450 is the bHLH domain; it reads QRRERHNRMERDRRRRIRICCDELNLLVPFCNAETDKATTLQWTTAFLKYI. An R1 epitope (recognized by Chagas's antibodies) region spans residues 481-500; it reads SLVTCPAQGSLQSSPSMEIK.

In terms of assembly, efficient DNA binding requires dimerization with another bHLH protein. Isoform 3 is testis specific. Isoform 2 is pancreas specific.

The protein resides in the nucleus. In terms of biological role, putative transcription factor. Isoform 3 may play a role in early spermatogenesis. The protein is Transcription factor-like 5 protein (TCFL5) of Homo sapiens (Human).